The following is a 375-amino-acid chain: Alcohol dehydrogenase 3, mitochondrial (375 aa).

The N-terminal 24 residues, 1–24 (MLRTSTLFTRRVQPSLFSRNILRL), are a transit peptide targeting the mitochondrion. Position 71 (Cys71) interacts with Zn(2+). Positions 72, 73, and 76 each coordinate NAD(+). Positions 94, 95, 125, 128, 131, 139, and 181 each coordinate Zn(2+). Residues Gly208, Gly209, Leu210, Asp229, Lys234, Phe249, Val296, Ser321, Val323, and Arg368 each contribute to the NAD(+) site.

It belongs to the zinc-containing alcohol dehydrogenase family. As to quaternary structure, homotetramer. It depends on Zn(2+) as a cofactor.

It localises to the mitochondrion matrix. It is found in the mitochondrion inner membrane. The catalysed reaction is a primary alcohol + NAD(+) = an aldehyde + NADH + H(+). It carries out the reaction a secondary alcohol + NAD(+) = a ketone + NADH + H(+). The enzyme catalyses ethanol + NAD(+) = acetaldehyde + NADH + H(+). It catalyses the reaction butan-1-ol + NAD(+) = butanal + NADH + H(+). The catalysed reaction is hexan-1-ol + NAD(+) = hexanal + NADH + H(+). Its function is as follows. Mitochondrial isozyme that reduces acetaldehyde to ethanol during the fermentation of glucose. Involved in the shuttling of mitochondrial reducing equivalents to the cytosol, where the redox balance is restored by NADH dehydrogenases on the external side of the mitochondrial inner membrane. Shows a high affinity for alcohols with a double bond conjugated to the alcohol group. The polypeptide is Alcohol dehydrogenase 3, mitochondrial (ADH3) (Saccharomyces cerevisiae (strain ATCC 204508 / S288c) (Baker's yeast)).